A 344-amino-acid polypeptide reads, in one-letter code: MKQTKTKYGKMKQMVSNLKLPDYRYEQLTKAIFHQRIDNFDDIHILPKALRMSLVNEFGKNVSSVIPVFSQDSKQARKLLFELTDGERIEAVGLKYKQGWESFCISSQCGCGFGCRFCATGSAGFKRNLTADEITDQLLYFYFNNHRLNSISFMGMGEAFANPELFDAVKILTDQNLFGLSQRRITISTIGIIPGIQRLTKKFPQVNLAFSLHSPFESQRSDLMPINKRFPLNEVMKTLDEHIIHTGRRVFIAYIMLEGINDSKEHAEAVVGLLKNRGSWEHLYHIDLIPYNSTDKTTFKFQSSSAIKQFCSTLKKAGISATVRTQFGSEISAACGQLCYENEL.

E90 (proton acceptor) is an active-site residue. Residues 97-330 (KQGWESFCIS…ATVRTQFGSE (234 aa)) enclose the Radical SAM core domain. The cysteines at positions 104 and 335 are disulfide-linked. Residues C111, C115, and C118 each coordinate [4Fe-4S] cluster. S-adenosyl-L-methionine is bound by residues 157–158 (GE), S188, 211–213 (SLH), and N292. The active-site S-methylcysteine intermediate is C335.

Belongs to the radical SAM superfamily. RlmN family. Cfr subfamily. [4Fe-4S] cluster serves as cofactor.

The protein localises to the cytoplasm. It catalyses the reaction adenosine(2503) in 23S rRNA + 2 reduced [2Fe-2S]-[ferredoxin] + 2 S-adenosyl-L-methionine = 8-methyladenosine(2503) in 23S rRNA + 5'-deoxyadenosine + L-methionine + 2 oxidized [2Fe-2S]-[ferredoxin] + S-adenosyl-L-homocysteine. Functionally, specifically methylates position 8 of adenine 2503 in 23S rRNA. Confers resistance to some classes of antibiotics. This chain is Ribosomal RNA large subunit methyltransferase Cfr, found in Clostridium botulinum (strain Loch Maree / Type A3).